Consider the following 383-residue polypeptide: 8-amino-7-oxononanoate synthase (383 aa).

A substrate-binding site is contributed by Arg21. 108 to 109 (GF) contributes to the pyridoxal 5'-phosphate binding site. His133 lines the substrate pocket. Ser179, His207, and Thr233 together coordinate pyridoxal 5'-phosphate. Residue Lys236 is modified to N6-(pyridoxal phosphate)lysine. Residue Thr350 participates in substrate binding.

Belongs to the class-II pyridoxal-phosphate-dependent aminotransferase family. BioF subfamily. As to quaternary structure, homodimer. Requires pyridoxal 5'-phosphate as cofactor.

The enzyme catalyses 6-carboxyhexanoyl-[ACP] + L-alanine + H(+) = (8S)-8-amino-7-oxononanoate + holo-[ACP] + CO2. It functions in the pathway cofactor biosynthesis; biotin biosynthesis. Functionally, catalyzes the decarboxylative condensation of pimeloyl-[acyl-carrier protein] and L-alanine to produce 8-amino-7-oxononanoate (AON), [acyl-carrier protein], and carbon dioxide. This chain is 8-amino-7-oxononanoate synthase, found in Cronobacter sakazakii (strain ATCC BAA-894) (Enterobacter sakazakii).